The chain runs to 254 residues: Trans-aconitate 2-methyltransferase (254 aa).

Belongs to the methyltransferase superfamily. Tam family.

The protein resides in the cytoplasm. It catalyses the reaction trans-aconitate + S-adenosyl-L-methionine = (E)-3-(methoxycarbonyl)pent-2-enedioate + S-adenosyl-L-homocysteine. Functionally, catalyzes the S-adenosylmethionine monomethyl esterification of trans-aconitate. The sequence is that of Trans-aconitate 2-methyltransferase from Mycobacterium sp. (strain JLS).